The sequence spans 464 residues: Protein FAM90A5 (464 aa).

3 disordered regions span residues Arg-16 to Leu-42, Pro-70 to Ala-389, and His-415 to Pro-437. Basic and acidic residues-rich tracts occupy residues Gly-74–Val-89 and Asn-97–Arg-114. The segment covering Leu-180–Leu-197 has biased composition (low complexity).

This sequence belongs to the FAM90 family.

The polypeptide is Protein FAM90A5 (Homo sapiens (Human)).